The primary structure comprises 160 residues: Cytochrome b6-f complex subunit 4 (160 aa).

3 consecutive transmembrane segments (helical) span residues 36 to 56, 95 to 115, and 131 to 151; these read LLYIFPVVILGTIACNVGLAV, LLGVLLMVSVPAGLLTVPFLE, and TVFLIGTAVALWLGIGATLPI.

Belongs to the cytochrome b family. PetD subfamily. The 4 large subunits of the cytochrome b6-f complex are cytochrome b6, subunit IV (17 kDa polypeptide, petD), cytochrome f and the Rieske protein, while the 4 small subunits are petG, petL, petM and petN. The complex functions as a dimer.

The protein localises to the plastid. It is found in the chloroplast thylakoid membrane. In terms of biological role, component of the cytochrome b6-f complex, which mediates electron transfer between photosystem II (PSII) and photosystem I (PSI), cyclic electron flow around PSI, and state transitions. The protein is Cytochrome b6-f complex subunit 4 of Morus indica (Mulberry).